Reading from the N-terminus, the 303-residue chain is NmrA-like family domain-containing oxidoreductase FVEG_08287 (303 aa).

NADP(+) is bound by residues 8–13, 8–14, 36–39, Arg37, 56–57, 77–79, and 159–162; these read LGAGEL, LGAGELG, LRPS, QG, IFR, and FMSF.

The protein belongs to the NmrA-type oxidoreductase family.

NmrA-like family domain-containing oxidoreductase; part of the Fusarium detoxification of benzoxazolinone cluster 1 (FDB1) involved in the degradation of benzoxazolinones produced by the host plant. Maize, wheat, and rye produce the 2 benzoxazinone phytoanticipins 2,4-dihy-droxy-7-methoxy-1,4-benzoxazin-3-one (DIMBOA) and 2,4-dihydroxy-1,4-benzoxazin-3-one (DIBOA) that, due to their inherent instability once released, spontaneously degrade to the more stable corresponding benzoxazolinones, 6-methoxy-2-benzoxazolinone (MBOA) and 2-benzoxazolinone (BOA), respectively. The first step in the detoxification of benzoxazolinones involves the hydrolysis of the cyclic ester bond of benzoxazolinones by the FDB1 cluster gamma-lactamase MBL1 to aminophenols. MBL1 is able to convert BOA into 2-aminophenol (2-AP), as well as MBOA into 5-methoxy-2-aminophenol (2-AMP). The FDB2 cluster N-malonyltransferase FDB2/NAT1 then metabolizes aminophenols via N-malonylation to non-toxic malonamic acids. FDB2/NAT1 converts 2-AP into N-(2-hydroxyphenyl) malonamic acid (HPMA) and 2-AMP into N-(2-hydroxy-4-methoxyphenyl) malonamic acid (HMPMA). The duplicated dienlactone hydrolases DLH1 and DLH2 may provide redundant function for hydrolyzing the lactone moiety in the BOA molecule. The roles of the amidases an other enzymes encoded by the 2 FDB clusters have not been identified so far. This chain is NmrA-like family domain-containing oxidoreductase FVEG_08287, found in Gibberella moniliformis (strain M3125 / FGSC 7600) (Maize ear and stalk rot fungus).